The chain runs to 695 residues: G-protein coupled receptor-associated protein LMBRD2 (695 aa).

Residues 1-5 (MSGAA) lie on the Extracellular side of the membrane. The helical transmembrane segment at 6–21 (LGLEIVFVFFLALFLL) threads the bilayer. Topologically, residues 22-32 (HRYGDFKKQHR) are cytoplasmic. A helical transmembrane segment spans residues 33-53 (LVIIGTLLAWYLCFLIVFILP). Topologically, residues 54–105 (LDVSTTIYNRCKHAAANSSPPENSNITGLYATANPVPSQHPCFKPWSYIPDG) are extracellular. Asn-78 carries an N-linked (GlcNAc...) asparagine glycan. A helical transmembrane segment spans residues 106 to 126 (IMPIFWRVVYWTSQFLTWILL). Over 127–150 (PFMQSYARSGGFSITGKIKTALIE) the chain is Cytoplasmic. The helical transmembrane segment at 151 to 171 (NAIYYGTYLLIFGAFLIYVAV) threads the bilayer. Over 172-186 (NPHLHLEWNQLQTIG) the chain is Extracellular. A helical membrane pass occupies residues 187-207 (IAAANTWGLFLLVLLLGYGLV). The Cytoplasmic portion of the chain corresponds to 208 to 387 (EIPRSYWNGA…ECLLRPWFYK (180 aa)). A coiled-coil region spans residues 227-262 (YFKAAKLMTEKADAEENLEDAMEEVRKVNESIKYNH). A helical membrane pass occupies residues 388–408 (ILAVVLSIFSVIVVWSECTFF). Residues 409–432 (STTPVLSLFAVFIQLAEKTYNYIY) are Extracellular-facing. The helical transmembrane segment at 433–453 (IEIACFLSIFFLSICVYSTVF) threads the bilayer. Over 454–473 (RIRVFNYYYLASHHQTDAYS) the chain is Cytoplasmic. A helical membrane pass occupies residues 474–494 (LLFSGMLFCRLTPPLCLNFLG). The Extracellular segment spans residues 495–521 (LTHMDSSISHKNTQPTAYTSIMGSMKV). The helical transmembrane segment at 522–542 (LSFIADGFYIYYPMLVVILCI) threads the bilayer. Topologically, residues 543 to 695 (ATYFSLGTRC…MSRSDIFNDV (153 aa)) are cytoplasmic. Residues 571 to 603 (LVNEGKELIRKEKRKRQRQEEGENRRREWKERY) are a coiled coil. A disordered region spans residues 581–628 (KEKRKRQRQEEGENRRREWKERYGHNREDSTRNRNIHTDPKESNFSDV). The span at 588–624 (RQEEGENRRREWKERYGHNREDSTRNRNIHTDPKESN) shows a compositional bias: basic and acidic residues. At Ser-633 the chain carries Phosphoserine. The tract at residues 662-682 (AETFTDDPLESESGRYQPGGR) is disordered.

The protein belongs to the LIMR family.

It is found in the cell membrane. In terms of biological role, recruited to ligand-activated beta-2 adrenergic receptor/ADRB2, it negatively regulates the adrenergic receptor signaling pathway. May also regulate other G-protein coupled receptors including type-1 angiotensin II receptor/AGTR1. The sequence is that of G-protein coupled receptor-associated protein LMBRD2 from Homo sapiens (Human).